Here is a 234-residue protein sequence, read N- to C-terminus: Large ribosomal subunit protein uL1 (234 aa).

This sequence belongs to the universal ribosomal protein uL1 family. Part of the 50S ribosomal subunit.

Binds directly to 23S rRNA. The L1 stalk is quite mobile in the ribosome, and is involved in E site tRNA release. Its function is as follows. Protein L1 is also a translational repressor protein, it controls the translation of the L11 operon by binding to its mRNA. The chain is Large ribosomal subunit protein uL1 from Salmonella agona (strain SL483).